The following is a 206-amino-acid chain: LexA repressor (206 aa).

The segment at residues 28–48 is a DNA-binding region (H-T-H motif); that stretch reads RAEIARELGFRSANAAEEHLK. Catalysis depends on for autocatalytic cleavage activity residues S123 and K160.

This sequence belongs to the peptidase S24 family. As to quaternary structure, homodimer.

The enzyme catalyses Hydrolysis of Ala-|-Gly bond in repressor LexA.. Functionally, represses a number of genes involved in the response to DNA damage (SOS response), including recA and lexA. In the presence of single-stranded DNA, RecA interacts with LexA causing an autocatalytic cleavage which disrupts the DNA-binding part of LexA, leading to derepression of the SOS regulon and eventually DNA repair. This chain is LexA repressor, found in Vibrio parahaemolyticus serotype O3:K6 (strain RIMD 2210633).